Reading from the N-terminus, the 144-residue chain is Small ribosomal subunit protein eS19 (144 aa).

This sequence belongs to the eukaryotic ribosomal protein eS19 family.

This is Small ribosomal subunit protein eS19 (RPS19) from Argopecten irradians (Bay scallop).